The primary structure comprises 544 residues: Chaperonin GroEL 2 (544 aa).

ATP contacts are provided by residues 29–32 (TLGP), 86–90 (DGTTT), G413, 479–481 (NAA), and D495.

This sequence belongs to the chaperonin (HSP60) family. Forms a cylinder of 14 subunits composed of two heptameric rings stacked back-to-back. Interacts with the co-chaperonin GroES.

The protein resides in the cytoplasm. It catalyses the reaction ATP + H2O + a folded polypeptide = ADP + phosphate + an unfolded polypeptide.. Its function is as follows. Together with its co-chaperonin GroES, plays an essential role in assisting protein folding. The GroEL-GroES system forms a nano-cage that allows encapsulation of the non-native substrate proteins and provides a physical environment optimized to promote and accelerate protein folding. The protein is Chaperonin GroEL 2 of Prochlorococcus marinus (strain MIT 9515).